The sequence spans 693 residues: Elongation factor G (693 aa).

Residues 8 to 282 (EKTRNIGIMA…AVIDYLPSPL (275 aa)) enclose the tr-type G domain. GTP-binding positions include 17–24 (AHVDAGKT), 81–85 (DTPGH), and 135–138 (NKMD).

It belongs to the TRAFAC class translation factor GTPase superfamily. Classic translation factor GTPase family. EF-G/EF-2 subfamily.

The protein resides in the cytoplasm. Catalyzes the GTP-dependent ribosomal translocation step during translation elongation. During this step, the ribosome changes from the pre-translocational (PRE) to the post-translocational (POST) state as the newly formed A-site-bound peptidyl-tRNA and P-site-bound deacylated tRNA move to the P and E sites, respectively. Catalyzes the coordinated movement of the two tRNA molecules, the mRNA and conformational changes in the ribosome. The polypeptide is Elongation factor G (Streptococcus pneumoniae serotype 2 (strain D39 / NCTC 7466)).